The following is a 364-amino-acid chain: Palmitoyltransferase ZDHHC9 (364 aa).

Residues 1-35 (MSVMVVRKKVTRKWEKLPGRNTFCCDGRVMMARQK) lie on the Cytoplasmic side of the membrane. The helical transmembrane segment at 36–56 (GIFYLTLFLILGTCTLFFAFE) threads the bilayer. The Lumenal portion of the chain corresponds to 57–63 (CRYLAVQ). Residues 64-84 (LSPAIPVFAAMLFLFSMATLL) form a helical membrane-spanning segment. The Cytoplasmic segment spans residues 85 to 183 (RTSFSDPGVI…NCVGKRNYRY (99 aa)). A DHHC domain is found at 139–189 (KYCYTCKIFRPPRASHCSICDNCVERFDHHCPWVGNCVGKRNYRYFYLFIL). Catalysis depends on Cys-169, which acts as the S-palmitoyl cysteine intermediate. The chain crosses the membrane as a helical span at residues 184-204 (FYLFILSLSLLTIYVFAFNIV). Topologically, residues 205-228 (YVALKSLKIGFLETLKETPGTVLE) are lumenal. A helical membrane pass occupies residues 229-249 (VLICFFTLWSVVGLTGFHTFL). The Cytoplasmic portion of the chain corresponds to 250–364 (VALNQTTNED…PPQEASEAEK (115 aa)). Residues 303–364 (PLEESGSRPP…PPQEASEAEK (62 aa)) are disordered. A compositionally biased stretch (polar residues) spans 310-336 (RPPSTQETSSSLLPQSPASTEHMNSNE). Residues 346–356 (EMPPPEPPEPP) show a composition bias toward pro residues.

The protein belongs to the DHHC palmitoyltransferase family. ERF2/ZDHHC9 subfamily. In terms of assembly, interacts with GOLGA7.

It is found in the endoplasmic reticulum membrane. The protein resides in the golgi apparatus membrane. It catalyses the reaction L-cysteinyl-[protein] + hexadecanoyl-CoA = S-hexadecanoyl-L-cysteinyl-[protein] + CoA. In terms of biological role, palmitoyltransferase that catalyzes the addition of palmitate onto various protein substrates, such as ADRB2, GSDMD, HRAS, NRAS and CGAS. The ZDHHC9-GOLGA7 complex is a palmitoyltransferase specific for HRAS and NRAS. May have a palmitoyltransferase activity toward the beta-2 adrenergic receptor/ADRB2 and therefore regulate G protein-coupled receptor signaling. Acts as a regulator of innate immunity by catalyzing palmitoylation of CGAS, thereby promoting CGAS homodimerization and cyclic GMP-AMP synthase activity. Activates pyroptosis by catalyzing palmitoylation of gasdermin-D (GSDMD), thereby promoting membrane translocation and pore formation of GSDMD. This chain is Palmitoyltransferase ZDHHC9 (Zdhhc9), found in Mus musculus (Mouse).